Consider the following 65-residue polypeptide: Movement protein TGBp3 (65 aa).

Over 1–6 (MLPKMQ) the chain is Lumenal. The helical transmembrane segment at 7–26 (PSAQCLIVFSLAFVLGWYVL) threads the bilayer. The Cytoplasmic segment spans residues 27 to 65 (RPGNTSCVLLITGESVRLVNCELTKDLVEAVLLRPLKHL).

This sequence belongs to the Tymovirales TGBp3 protein family.

It is found in the host endoplasmic reticulum membrane. In terms of biological role, plays a role in viral cell-to-cell propagation, by facilitating genome transport to neighboring plant cells through plasmosdesmata. May induce the formation of granular vesicles derived from the Endoplasmic reticulum, which align on actin filaments. This Potato virus S (strain Peruvian) protein is Movement protein TGBp3.